Consider the following 238-residue polypeptide: Ribosomal RNA small subunit methyltransferase G (238 aa).

Residues glycine 78, phenylalanine 83, 129-130, and arginine 148 each bind S-adenosyl-L-methionine; that span reads AE. Residues 216–238 form a disordered region; that stretch reads EKKKETPKKYPRKAGTPAKNPIK.

This sequence belongs to the methyltransferase superfamily. RNA methyltransferase RsmG family.

The protein resides in the cytoplasm. In terms of biological role, specifically methylates the N7 position of a guanine in 16S rRNA. The chain is Ribosomal RNA small subunit methyltransferase G from Lactococcus lactis subsp. lactis (strain IL1403) (Streptococcus lactis).